Here is a 121-residue protein sequence, read N- to C-terminus: Heimdall profilin (121 aa).

Belongs to the Asgard profilin family.

It localises to the cytoplasm. The protein resides in the cytoskeleton. Its function is as follows. Binds to actin and affects the structure of the cytoskeleton. At high concentrations inhibits spontaneous rabbit actin nucleation. This strongly suggests this archaea has a profilin-regulated actin system, and actin-type genes can be identified in this organism. This Heimdallarchaeota archaeon (strain LC_2) protein is Heimdall profilin.